We begin with the raw amino-acid sequence, 502 residues long: Probable glycine dehydrogenase (decarboxylating) subunit 2 (502 aa).

At K273 the chain carries N6-(pyridoxal phosphate)lysine.

This sequence belongs to the GcvP family. C-terminal subunit subfamily. As to quaternary structure, the glycine cleavage system is composed of four proteins: P, T, L and H. In this organism, the P 'protein' is a heterodimer of two subunits. It depends on pyridoxal 5'-phosphate as a cofactor.

The enzyme catalyses N(6)-[(R)-lipoyl]-L-lysyl-[glycine-cleavage complex H protein] + glycine + H(+) = N(6)-[(R)-S(8)-aminomethyldihydrolipoyl]-L-lysyl-[glycine-cleavage complex H protein] + CO2. In terms of biological role, the glycine cleavage system catalyzes the degradation of glycine. The P protein binds the alpha-amino group of glycine through its pyridoxal phosphate cofactor; CO(2) is released and the remaining methylamine moiety is then transferred to the lipoamide cofactor of the H protein. The chain is Probable glycine dehydrogenase (decarboxylating) subunit 2 from Pyrococcus abyssi (strain GE5 / Orsay).